The following is a 471-amino-acid chain: DENN domain-containing protein 2D (471 aa).

The 150-residue stretch at 55–204 folds into the uDENN domain; it reads EYLLVVSLKK…AFPAPGKTVT (150 aa). In terms of domain architecture, cDENN spans 226 to 359; that stretch reads HLEHVDFSSL…LQDDILDSLG (134 aa). One can recognise a dDENN domain in the interval 361 to 445; the sequence is GINELKTAEQ…QEAEKSKNPP (85 aa).

In terms of tissue distribution, in bronchial mucosa, mainly expressed in ciliated and basal epithelial cells and weakly in alveolar cells (at protein level). Tends to be down-regulated in lung cancers, immortalized bronchial epithelial cell lines and precancerous lesions.

The protein resides in the cytoplasm. Its function is as follows. Guanine nucleotide exchange factor (GEF) which may activate RAB9A and RAB9B. Promotes the exchange of GDP to GTP, converting inactive GDP-bound Rab proteins into their active GTP-bound form. The protein is DENN domain-containing protein 2D (DENND2D) of Homo sapiens (Human).